We begin with the raw amino-acid sequence, 298 residues long: Putative S-adenosyl-L-methionine-dependent methyltransferase MSMEG_1480/MSMEI_1444 (298 aa).

Residues Asp-127 and 156-157 (DL) contribute to the S-adenosyl-L-methionine site.

The protein belongs to the UPF0677 family.

In terms of biological role, exhibits S-adenosyl-L-methionine-dependent methyltransferase activity. This is Putative S-adenosyl-L-methionine-dependent methyltransferase MSMEG_1480/MSMEI_1444 from Mycolicibacterium smegmatis (strain ATCC 700084 / mc(2)155) (Mycobacterium smegmatis).